A 108-amino-acid polypeptide reads, in one-letter code: Iron-sulfur cluster assembly protein CyaY (108 aa).

The protein belongs to the frataxin family.

Involved in iron-sulfur (Fe-S) cluster assembly. May act as a regulator of Fe-S biogenesis. The sequence is that of Iron-sulfur cluster assembly protein CyaY from Burkholderia vietnamiensis (strain G4 / LMG 22486) (Burkholderia cepacia (strain R1808)).